Here is a 518-residue protein sequence, read N- to C-terminus: MPQSAEHVLDHVELFRGPEYQQMLAKKKIFENPRDPAEVERIKEWTKTAEYREKNFAREALAVNPAKACQPLGAVFASVGFERTLPFVHGSQGCVAYYRSHLSRHFKEPSSCVSSSMTEDAAVFGGLNNMTDGLANSYKMYKPKMIAVSTTCMAEVIGDDLNAFIKTSKEKGSVPADFDVPFAHTPAFVGSHVTGYDNALKGILEHFWDGKAGTAPKLERKPNGAINIIGGFDGYTVGNLREIKRILELMGIQHTVLADNSEVFDTPTDGEFRMYDGGTTLKDAANAIHAKATISMQQWCTEKTLSFAAEHGQDVLSFNYPVGLSATDDFIVALSRISGKEIPEQLARERGRLVDAIADSSAHVHGKKFAIYGDPDLCYGLAAFLLELGAEPTHVLSTNGNKAWQEKMQALLASSPFGQGCQVYPGRDLWHMRSLLFTEPVDFLIGNTYGKYLERDTATPLIRIGFPIFDRHHHHRSPIWGYQGGLNVLVKILDKIFDEIDNKTNILGKTDYSFDIIR.

[8Fe-7S] cluster-binding residues include cysteine 69, cysteine 94, and cysteine 152.

It belongs to the NifD/NifK/NifE/NifN family. Tetramer of two alpha and two beta chains. Forms complex with the iron protein (nitrogenase component 2). Requires [8Fe-7S] cluster as cofactor.

The catalysed reaction is N2 + 8 reduced [2Fe-2S]-[ferredoxin] + 16 ATP + 16 H2O = H2 + 8 oxidized [2Fe-2S]-[ferredoxin] + 2 NH4(+) + 16 ADP + 16 phosphate + 6 H(+). Functionally, this molybdenum-iron protein is part of the nitrogenase complex that catalyzes the key enzymatic reactions in nitrogen fixation. The chain is Nitrogenase molybdenum-iron protein beta chain (nifK) from Bradyrhizobium diazoefficiens (strain JCM 10833 / BCRC 13528 / IAM 13628 / NBRC 14792 / USDA 110).